We begin with the raw amino-acid sequence, 591 residues long: PDZ and LIM domain protein 5 (591 aa).

N-acetylserine is present on S2. S2 carries the phosphoserine modification. Residues 2–85 (SNYSVSLVGP…SLNMTLQRAS (84 aa)) form the PDZ domain. K89 is subject to N6-acetyllysine; alternate. K89 is subject to N6-succinyllysine; alternate. K89 is covalently cross-linked (Glycyl lysine isopeptide (Lys-Gly) (interchain with G-Cter in SUMO2); alternate). Residues E102, K105, S111, S134, and S137 each carry the phosphoserine modification. 2 disordered regions span residues 121–166 (TNMA…PTPV) and 186–398 (SADQ…DQDT). A compositionally biased stretch (polar residues) spans 134 to 143 (SVSSPKVTSI). Residues 144–166 (PSPSSAFTPAHAATSSHASPTPV) are compositionally biased toward low complexity. 2 stretches are compositionally biased toward polar residues: residues 186–195 (SADQCSSPPN) and 205–217 (RQPTVTSVCSESA). Phosphoserine is present on residues Q218, S228, and S260. 2 stretches are compositionally biased toward basic and acidic residues: residues 258–273 (DASKKRLIEDTEDWRP) and 294–304 (HLTESENDNTK). Residues 310 to 339 (QEPSQQPASSGASPLSASEGPESPGSSRPS) show a composition bias toward low complexity. Phosphoserine occurs at positions 313, 316, and 322. K350 carries the N6-acetyllysine modification. The segment covering 353–385 (GSTSVKSPSWQRPNQAAPSTGRISNNARSSGTG) has biased composition (polar residues). Phosphoserine is present on residues S359 and S361. LIM zinc-binding domains are found at residues 413–472 (PMCA…FFAP), 472–531 (PECG…LFGT), and 531–591 (TICR…SVNF).

As to quaternary structure, interacts with various PKC isoforms through the LIM domains. Interacts with actin and alpha-actinin through the PDZ domain. Interacts (via LIM domains) with SIPA1L1/SPAR; this interaction may occur preferentially with isoform 1.

It localises to the postsynaptic density. The protein localises to the presynapse. It is found in the postsynapse. Its subcellular location is the cytoplasm. The protein resides in the cytosol. Functionally, may play an important role in the heart development by scaffolding PKC to the Z-disk region. May play a role in the regulation of cardiomyocyte expansion. Isoforms lacking the LIM domains may negatively modulate the scaffolding activity of isoform 1. Overexpression promotes the development of heart hypertrophy. Contributes to the regulation of dendritic spine morphogenesis in neurons. May be required to restrain postsynaptic growth of excitatory synapses. Isoform 1, but not isoform 2, expression favors spine thinning and elongation. This Mus musculus (Mouse) protein is PDZ and LIM domain protein 5.